A 404-amino-acid polypeptide reads, in one-letter code: Keratin, type I cuticular Ha3-I (404 aa).

The segment at 1–56 (MSYSCGLPNLSCRTSCSSRPCVPPSCHGCTLPGACNIPANVSNCNWFCEGSFNGSE) is head. Positions 56–367 (EKETMQFLND…SLLESEDCKL (312 aa)) constitute an IF rod domain. Residues 57–91 (KETMQFLNDRLASYLEKVRQLERDNAELENLIRER) form a coil 1A region. Residues 92 to 102 (SQQQEPLVCAS) form a linker 1 region. The segment at 103–203 (YQSYFKTIEE…HEQEVNTLRC (101 aa)) is coil 1B. Residues 204–219 (QLGGRLNVEVDAAPAV) are linker 12. The tract at residues 220 to 363 (DLNQVLNETR…NTYRSLLESE (144 aa)) is coil 2. The tail stretch occupies residues 364–404 (DCKLPSNPCAITNACDKSTGPCISNPCGPRARCGPCNTFGY).

This sequence belongs to the intermediate filament family.

The polypeptide is Keratin, type I cuticular Ha3-I (Pan troglodytes (Chimpanzee)).